Here is a 407-residue protein sequence, read N- to C-terminus: Imidazolonepropionase (407 aa).

2 residues coordinate Fe(3+): H68 and H70. The Zn(2+) site is built by H68 and H70. Positions 77, 140, and 173 each coordinate 4-imidazolone-5-propanoate. Y140 is an N-formimidoyl-L-glutamate binding site. Residue H238 participates in Fe(3+) binding. H238 lines the Zn(2+) pocket. 4-imidazolone-5-propanoate is bound at residue Q241. D313 serves as a coordination point for Fe(3+). A Zn(2+)-binding site is contributed by D313. Positions 315 and 317 each coordinate N-formimidoyl-L-glutamate. T318 contributes to the 4-imidazolone-5-propanoate binding site.

The protein belongs to the metallo-dependent hydrolases superfamily. HutI family. Zn(2+) is required as a cofactor. Requires Fe(3+) as cofactor.

It is found in the cytoplasm. The enzyme catalyses 4-imidazolone-5-propanoate + H2O = N-formimidoyl-L-glutamate. It functions in the pathway amino-acid degradation; L-histidine degradation into L-glutamate; N-formimidoyl-L-glutamate from L-histidine: step 3/3. Catalyzes the hydrolytic cleavage of the carbon-nitrogen bond in imidazolone-5-propanoate to yield N-formimidoyl-L-glutamate. It is the third step in the universal histidine degradation pathway. The polypeptide is Imidazolonepropionase (Burkholderia ambifaria (strain ATCC BAA-244 / DSM 16087 / CCUG 44356 / LMG 19182 / AMMD) (Burkholderia cepacia (strain AMMD))).